A 519-amino-acid chain; its full sequence is Methionine--tRNA ligase (519 aa).

The 'HIGH' region signature appears at 11 to 21 (AYPNAAPHVGH). Positions 299–303 (KMSKS) match the 'KMSKS' region motif. Lys-302 contributes to the ATP binding site. Positions 500-519 (LPPPTGVFPRYQPPQPPEGK) are disordered.

The protein belongs to the class-I aminoacyl-tRNA synthetase family. MetG type 2B subfamily. As to quaternary structure, monomer.

It localises to the cytoplasm. It carries out the reaction tRNA(Met) + L-methionine + ATP = L-methionyl-tRNA(Met) + AMP + diphosphate. Its function is as follows. Is required not only for elongation of protein synthesis but also for the initiation of all mRNA translation through initiator tRNA(fMet) aminoacylation. The polypeptide is Methionine--tRNA ligase (metG) (Mycobacterium tuberculosis (strain CDC 1551 / Oshkosh)).